A 116-amino-acid polypeptide reads, in one-letter code: Staphylococcal complement inhibitor (116 aa).

A signal peptide spans 1–31; sequence MKIRKSILAGTLAIVLASPLVTNLDKNEAQA. Positions 62 to 79 are essential for activity; the sequence is LATGSLNTYYKRTIKISG.

This sequence belongs to the SCIN family.

The protein localises to the secreted. In terms of biological role, involved in countering the first line of host defense mechanisms. Efficiently inhibits opsonization, phagocytosis and killing of S.aureus by human neutrophils. Acts by binding and stabilizing human C3 convertases (C4b2a and C3bBb), leading to their inactivation. The convertases are no longer able to cleave complement C3, therefore preventing further C3b deposition on the bacterial surface and phagocytosis of the bacterium. Also prevents C5a-induced neutrophil responses. The sequence is that of Staphylococcal complement inhibitor (scn) from Staphylococcus aureus (strain N315).